The sequence spans 454 residues: MDKKPLNTLISATGLWMSRTGTIHKIKHHEVSRSKIYIEMACGDHLVVNNSRSSRTARALRHHKYRKTCKRCRVSDEDLNKFLTKANEDQTSVKVKVVSAPTRTKKAMPKSVARAPKPLENTEAAQAQPSGSKFSPAIPVSTQESVSVPASVSTSISSISTGATASALVKGNTNPITSMSAPVQASAPALTKSQTDRLEVLLNPKDEISLNSGKPFRELESELLSRRKKDLQQIYAEERENYLGKLEREITRFFVDRGFLEIKSPILIPLEYIERMGIDNDTELSKQIFRVDKNFCLRPMLAPNLYNYLRKLDRALPDPIKIFEIGPCYRKESDGKEHLEEFTMLNFCQMGSGCTRENLESIITDFLNHLGIDFKIVGDSCMVYGDTLDVMHGDLELSSAVVGPIPLDREWGIDKPWIGAGFGLERLLKVKHDFKNIKRAARSESYYNGISTNL.

The interval 102 to 138 (TRTKKAMPKSVARAPKPLENTEAAQAQPSGSKFSPAI) is disordered. Over residues 123-133 (EAAQAQPSGSK) the composition is skewed to polar residues.

The protein belongs to the class-II aminoacyl-tRNA synthetase family.

The protein localises to the cytoplasm. It catalyses the reaction tRNA(Pyl) + L-pyrrolysine + ATP = L-pyrrolysyl-tRNA(Pyl) + AMP + diphosphate. Functionally, catalyzes the attachment of pyrrolysine to tRNA(Pyl). Pyrrolysine is a lysine derivative encoded by the termination codon UAG. The sequence is that of Pyrrolysine--tRNA ligase from Methanosarcina mazei (strain ATCC BAA-159 / DSM 3647 / Goe1 / Go1 / JCM 11833 / OCM 88) (Methanosarcina frisia).